A 359-amino-acid chain; its full sequence is RuBisCO accumulation factor 1 (359 aa).

Residues 12–195 (LSPEETDALF…RQKIEQLLSD (184 aa)) form an N-terminal alpha-helix region. Residues 219–345 (PLLIPVAGSL…VLLVMRPKKI (127 aa)) are C-terminal beta-sheet.

The protein belongs to the RAF family. In terms of assembly, homodimer. Forms an RbcL(8)-Raf1(8) complex. Forms complexes of many stoichiometries with RbcL with and without RbcS. RbcX and Raf1 can bind simultaneously to RbcL.

The protein localises to the cytoplasm. In terms of biological role, a major RuBisCO chaperone. Acts after GroEL-GroES chaperonin to fold and/or assemble the large subunit of RuBisCO (ccbL, rbcL). Cooperates with RbcX in RbcL folding, plays the major role in assembly of dimers into RbcL(8)-Raf1(8) intermediate complexes. RbcS replaces Raf1, leading to holoenzyme formation. Functionally, raf1 and RbcX are probably functionally redundant; it has been suggested they may cooperate. The chain is RuBisCO accumulation factor 1 from Picosynechococcus sp. (strain ATCC 27264 / PCC 7002 / PR-6) (Agmenellum quadruplicatum).